The primary structure comprises 344 residues: N-acetyl-gamma-glutamyl-phosphate reductase (344 aa).

Cys-148 is a catalytic residue.

The protein belongs to the NAGSA dehydrogenase family. Type 1 subfamily.

The protein localises to the cytoplasm. It catalyses the reaction N-acetyl-L-glutamate 5-semialdehyde + phosphate + NADP(+) = N-acetyl-L-glutamyl 5-phosphate + NADPH + H(+). Its pathway is amino-acid biosynthesis; L-arginine biosynthesis; N(2)-acetyl-L-ornithine from L-glutamate: step 3/4. Catalyzes the NADPH-dependent reduction of N-acetyl-5-glutamyl phosphate to yield N-acetyl-L-glutamate 5-semialdehyde. The polypeptide is N-acetyl-gamma-glutamyl-phosphate reductase (Clostridium beijerinckii (strain ATCC 51743 / NCIMB 8052) (Clostridium acetobutylicum)).